A 190-amino-acid chain; its full sequence is Shikimate kinase (190 aa).

ATP is bound at residue 15 to 20; sequence GSGKST. Serine 19 provides a ligand contact to Mg(2+). Residues aspartate 37, arginine 61, and glycine 83 each coordinate substrate. Arginine 121 contributes to the ATP binding site. Arginine 148 is a substrate binding site.

The protein belongs to the shikimate kinase family. As to quaternary structure, monomer. The cofactor is Mg(2+).

Its subcellular location is the cytoplasm. It catalyses the reaction shikimate + ATP = 3-phosphoshikimate + ADP + H(+). Its pathway is metabolic intermediate biosynthesis; chorismate biosynthesis; chorismate from D-erythrose 4-phosphate and phosphoenolpyruvate: step 5/7. In terms of biological role, catalyzes the specific phosphorylation of the 3-hydroxyl group of shikimic acid using ATP as a cosubstrate. This chain is Shikimate kinase, found in Chlorobium chlorochromatii (strain CaD3).